Consider the following 580-residue polypeptide: Bifunctional lycopene cyclase/phytoene synthase (580 aa).

A run of 3 helical transmembrane segments spans residues 3 to 23 (WEYAQVHLKYTIPFGVVLAAV), 35 to 55 (KLVFLITVAVVSTIPWDSYLI), and 65 to 85 (GVVVGLTAWDIPAEELFFFVI). N-linked (GlcNAc...) asparagine glycosylation occurs at N89. A run of 4 helical transmembrane segments spans residues 116-136 (IAGQILFASAIIFGLVSVSSG), 139-159 (GMYMGLILIWACPFLLFLWSI), 171-191 (NTALPIALPTLYLWVVDTFAL), and 214-234 (IEEAVFFLLTNTLIVFGLIAC).

It in the N-terminal section; belongs to the lycopene beta-cyclase family. In the C-terminal section; belongs to the phytoene/squalene synthase family.

It is found in the membrane. The enzyme catalyses all-trans-lycopene = gamma-carotene. The catalysed reaction is gamma-carotene = all-trans-beta-carotene. It catalyses the reaction 2 (2E,6E,10E)-geranylgeranyl diphosphate = 15-cis-phytoene + 2 diphosphate. It participates in carotenoid biosynthesis; beta-carotene biosynthesis. Its pathway is carotenoid biosynthesis; phytoene biosynthesis; all-trans-phytoene from geranylgeranyl diphosphate: step 1/1. Its function is as follows. Bifunctional enzyme; part of the car gene cluster that mediates the biosynthesis of neurosporaxanthin, a carboxylic apocarotenoid acting as an essential protective pigments and leading to orange pigmentation. CarAR catalyzes the first step of the pathway by converting geranylgeranyl diphosphate to phytoene, as well as the later cyclization step that transforms the carB product lycopene into gamma-carotene. CarAR also converts part of gamma-carotene into beta-carotene. Neurosporaxanthin is synthesized from geranyl-geranyl pyrophosphate (GGPP) through several enzymatic activities. Phytoene synthase activity performed by the bifunctional enzyme carAR first produces phytoene from geranyl-geranyl pyrophosphate (GGPP). The phytoene dehydrogenase carB then introduces 4 desaturations to lead to lycopene which is substrate of the carotene cyclase activity of carAR that leads to the production of gamma-carotene. CarB then performs a 5th desaturation reaction to yield torulene. Torulene is the substrate of the dioxidase carT that breaks the molecule, removing five carbon atoms to yield beta-apo-4'-carotenal, whereas the aldehyde dehydrogenase carD mediates the last step by converting beta-apo-4'-carotenal into neurosporaxanthin. The protein is Bifunctional lycopene cyclase/phytoene synthase of Gibberella fujikuroi (strain CBS 195.34 / IMI 58289 / NRRL A-6831) (Bakanae and foot rot disease fungus).